We begin with the raw amino-acid sequence, 793 residues long: 3',5'-cyclic-nucleotide phosphodiesterase regA (793 aa).

A disordered region spans residues 1-153 (MNNKQEEIDQ…SSHRVSDFSD (153 aa)). 3 stretches are compositionally biased toward low complexity: residues 13–34 (SSTS…DSTS), 54–69 (NKNN…SNNN), and 80–121 (NNSS…NNNN). Residues 161-280 (RILVADDDDV…LLKKKIDTVL (120 aa)) enclose the Response regulatory domain. The residue at position 212 (Asp-212) is a 4-aspartylphosphate. The 324-residue stretch at 410–733 (RRNSIPTFPQ…ENWQAYMELQ (324 aa)) folds into the PDEase domain. The Proton donor role is filled by His-487. A divalent metal cation contacts are provided by His-491, His-527, Asp-528, and Asp-639. Residues 756 to 793 (KLPKIDEEENRDKVSSSSSSSTAPLTSTSSSNNETSSS) are disordered. The span at 770–793 (SSSSSSSTAPLTSTSSSNNETSSS) shows a compositional bias: low complexity.

Belongs to the cyclic nucleotide phosphodiesterase family. It depends on a divalent metal cation as a cofactor. In terms of processing, the phosphorelay mechanism involves the sequential transfer of a phosphate group from Asp-212 of pde2 to 'His-65' of rdeA. Phosphorylation of Asp-212 activates the phosphodiesterase domain.

The protein localises to the cytoplasm. Its subcellular location is the cytosol. It carries out the reaction 3',5'-cyclic AMP + H2O = AMP + H(+). Inhibited by 3-isobutyl-1-methylxanthine (IBMX). Phosphodiesterase specific for cAMP. Involved in the degradation of intracellular cAMP. Morphological suppressor of tagB. Phosphorelay protein that accepts phosphate from rdeA or supplies phosphate from regA; depending on the relative concentration of the phosphodonor proteins. The chain is 3',5'-cyclic-nucleotide phosphodiesterase regA (regA) from Dictyostelium discoideum (Social amoeba).